The sequence spans 234 residues: Purine nucleoside phosphorylase DeoD-type (234 aa).

A purine D-ribonucleoside is bound at residue H4. Residues G20, R24, R43, and 87-90 each bind phosphate; that span reads RIGS. Residues 179-181 and 203-204 contribute to the a purine D-ribonucleoside site; these read DME and SD. Catalysis depends on D204, which acts as the Proton donor.

It belongs to the PNP/UDP phosphorylase family. Homohexamer; trimer of homodimers.

It catalyses the reaction a purine D-ribonucleoside + phosphate = a purine nucleobase + alpha-D-ribose 1-phosphate. The catalysed reaction is a purine 2'-deoxy-D-ribonucleoside + phosphate = a purine nucleobase + 2-deoxy-alpha-D-ribose 1-phosphate. Its function is as follows. Catalyzes the reversible phosphorolytic breakdown of the N-glycosidic bond in the beta-(deoxy)ribonucleoside molecules, with the formation of the corresponding free purine bases and pentose-1-phosphate. In Shewanella oneidensis (strain ATCC 700550 / JCM 31522 / CIP 106686 / LMG 19005 / NCIMB 14063 / MR-1), this protein is Purine nucleoside phosphorylase DeoD-type.